Reading from the N-terminus, the 367-residue chain is tRNA-specific 2-thiouridylase MnmA (367 aa).

Residues 24 to 31 and L50 each bind ATP; that span reads AMSGGVDS. C115 (nucleophile) is an active-site residue. An intrachain disulfide couples C115 to C211. G139 contributes to the ATP binding site. The interaction with tRNA stretch occupies residues 161-163; it reads KDQ. C211 serves as the catalytic Cysteine persulfide intermediate.

The protein belongs to the MnmA/TRMU family.

The protein resides in the cytoplasm. It carries out the reaction S-sulfanyl-L-cysteinyl-[protein] + uridine(34) in tRNA + AH2 + ATP = 2-thiouridine(34) in tRNA + L-cysteinyl-[protein] + A + AMP + diphosphate + H(+). Functionally, catalyzes the 2-thiolation of uridine at the wobble position (U34) of tRNA, leading to the formation of s(2)U34. The sequence is that of tRNA-specific 2-thiouridylase MnmA from Ehrlichia canis (strain Jake).